The chain runs to 288 residues: Polyamine aminopropyltransferase (288 aa).

A PABS domain is found at 9–238 (ETLHDQFGQY…GIMTFAWATD (230 aa)). Gln33 contacts S-methyl-5'-thioadenosine. Positions 64 and 88 each coordinate spermidine. Residues Glu108 and 140-141 (DG) each bind S-methyl-5'-thioadenosine. Catalysis depends on Asp158, which acts as the Proton acceptor. 158–161 (DCTD) lines the spermidine pocket. Pro165 serves as a coordination point for S-methyl-5'-thioadenosine.

This sequence belongs to the spermidine/spermine synthase family. Homodimer or homotetramer.

Its subcellular location is the cytoplasm. It catalyses the reaction S-adenosyl 3-(methylsulfanyl)propylamine + putrescine = S-methyl-5'-thioadenosine + spermidine + H(+). Its pathway is amine and polyamine biosynthesis; spermidine biosynthesis; spermidine from putrescine: step 1/1. Its function is as follows. Catalyzes the irreversible transfer of a propylamine group from the amino donor S-adenosylmethioninamine (decarboxy-AdoMet) to putrescine (1,4-diaminobutane) to yield spermidine. This chain is Polyamine aminopropyltransferase, found in Escherichia coli (strain UTI89 / UPEC).